The primary structure comprises 404 residues: Probable tRNA sulfurtransferase (404 aa).

The THUMP domain occupies 61–166 (EAVSERLKDV…SGYSYIMCDE (106 aa)). ATP is bound by residues 184–185 (LL), 209–210 (HF), arginine 266, glycine 288, and glutamine 297.

It belongs to the ThiI family.

It localises to the cytoplasm. It carries out the reaction [ThiI sulfur-carrier protein]-S-sulfanyl-L-cysteine + a uridine in tRNA + 2 reduced [2Fe-2S]-[ferredoxin] + ATP + H(+) = [ThiI sulfur-carrier protein]-L-cysteine + a 4-thiouridine in tRNA + 2 oxidized [2Fe-2S]-[ferredoxin] + AMP + diphosphate. The enzyme catalyses [ThiS sulfur-carrier protein]-C-terminal Gly-Gly-AMP + S-sulfanyl-L-cysteinyl-[cysteine desulfurase] + AH2 = [ThiS sulfur-carrier protein]-C-terminal-Gly-aminoethanethioate + L-cysteinyl-[cysteine desulfurase] + A + AMP + 2 H(+). It participates in cofactor biosynthesis; thiamine diphosphate biosynthesis. Catalyzes the ATP-dependent transfer of a sulfur to tRNA to produce 4-thiouridine in position 8 of tRNAs, which functions as a near-UV photosensor. Also catalyzes the transfer of sulfur to the sulfur carrier protein ThiS, forming ThiS-thiocarboxylate. This is a step in the synthesis of thiazole, in the thiamine biosynthesis pathway. The sulfur is donated as persulfide by IscS. The sequence is that of Probable tRNA sulfurtransferase from Bacillus cereus (strain ATCC 10987 / NRS 248).